Here is a 1050-residue protein sequence, read N- to C-terminus: Self-sufficient cytochrome P450 monooxygenase CYP505E3 (1050 aa).

Residue C406 coordinates heme. Polar residues predominate over residues 459–481 (RGQSATGLSQGSMSASGATSSVA). A disordered region spans residues 459–495 (RGQSATGLSQGSMSASGATSSVASPGPPAATGAQSNP). Residues 501–641 (ISFFYGSNSG…DLELWEETNL (141 aa)) enclose the Flavodoxin-like domain. FMN-binding positions include 507–511 (SNSGT) and 585–617 (VFGC…TRLT). The 229-residue stretch at 679–907 (RGLVEAKVTA…RPAKDAFHLP (229 aa)) folds into the FAD-binding FR-type domain.

In the N-terminal section; belongs to the cytochrome P450 family. Requires FAD as cofactor. It depends on FMN as a cofactor. The cofactor is heme.

The catalysed reaction is 2 oxidized [cytochrome P450] + NADPH = 2 reduced [cytochrome P450] + NADP(+) + H(+). The enzyme catalyses an organic molecule + reduced [NADPH--hemoprotein reductase] + O2 = an alcohol + oxidized [NADPH--hemoprotein reductase] + H2O + H(+). It carries out the reaction decane + reduced [NADPH--hemoprotein reductase] + O2 = 3-decanol + oxidized [NADPH--hemoprotein reductase] + H2O + H(+). It catalyses the reaction dodecane + reduced [NADPH--hemoprotein reductase] + O2 = 5-dodecanol + oxidized [NADPH--hemoprotein reductase] + H2O + H(+). The catalysed reaction is tetradecane + reduced [NADPH--hemoprotein reductase] + O2 = 7-tetradecanol + oxidized [NADPH--hemoprotein reductase] + H2O + H(+). The enzyme catalyses hexadecane + reduced [NADPH--hemoprotein reductase] + O2 = 9-hexadecanol + oxidized [NADPH--hemoprotein reductase] + H2O + H(+). It carries out the reaction dodecanoate + reduced [NADPH--hemoprotein reductase] + O2 = 5-hydroxydodecanoate + oxidized [NADPH--hemoprotein reductase] + H2O + H(+). It catalyses the reaction tetradecanoate + reduced [NADPH--hemoprotein reductase] + O2 = 7-hydroxytetradecanoate + oxidized [NADPH--hemoprotein reductase] + H2O + H(+). The catalysed reaction is hexadecanoate + reduced [NADPH--hemoprotein reductase] + O2 = 9-hydroxyhexadecanoate + oxidized [NADPH--hemoprotein reductase] + H2O + H(+). The enzyme catalyses decan-1-ol + reduced [NADPH--hemoprotein reductase] + O2 = 1,3-decanediol + oxidized [NADPH--hemoprotein reductase] + H2O + H(+). It carries out the reaction decan-1-ol + reduced [NADPH--hemoprotein reductase] + O2 = 1,7-decanediol + oxidized [NADPH--hemoprotein reductase] + H2O + H(+). It catalyses the reaction dodecan-1-ol + reduced [NADPH--hemoprotein reductase] + O2 = 1,5-dodecanediol + oxidized [NADPH--hemoprotein reductase] + H2O + H(+). The catalysed reaction is dodecan-1-ol + reduced [NADPH--hemoprotein reductase] + O2 = 1,4-dodecanediol + oxidized [NADPH--hemoprotein reductase] + H2O + H(+). The enzyme catalyses dodecan-1-ol + reduced [NADPH--hemoprotein reductase] + O2 = 1,6-dodecanediol + oxidized [NADPH--hemoprotein reductase] + H2O + H(+). Functionally, self-sufficient cytochrome P450 monooxygenase that catalyzes the regioselective in-chain hydroxylation of alkanes, fatty alcohols, and fatty acids at the omega-7 position. Performs hydroxylation of C10-C16 n-alkanes and C12 and C14 fatty alcohols; and thereby enables the one step biocatalytic synthesis of rare alcohols such as 5-dodecanol and 7-tetradecanol. Converts 1-dodecanol into 1,5-dodecanediol as major product with very little sub-terminally hydroxylated products with the 1,4-dodecanediol and 1,6-dodecanediol more abundant. Does not use hexadecanediol nor decanoic acid as substrates. Converts dodecanoic acid to 5-hydroxydodecanoic acid which can be further converted into delta-dodecalactone by lactonization of the 5-hydroxy acid at low pH. Also gives sub-terminal hydroxylation of dodecanoic acid with 9-hydroxydodecanoic acid being the second most abundant product. The C14 and C16 fatty acids are double hydroxylated to yield dihydroxy acids hydroxylated at both the omega-7 position and a sub-terminal position (omega-1, omega-2, or omega-3). In Aspergillus terreus (strain NIH 2624 / FGSC A1156), this protein is Self-sufficient cytochrome P450 monooxygenase CYP505E3.